The primary structure comprises 610 residues: Phosphomethylpyrimidine synthase (610 aa).

Residues Asn216, Met245, Tyr274, His310, 330-332 (SRG), 371-374 (DGLR), and Glu410 each bind substrate. His414 contributes to the Zn(2+) binding site. Tyr437 provides a ligand contact to substrate. His478 contributes to the Zn(2+) binding site. Positions 558, 561, and 566 each coordinate [4Fe-4S] cluster.

This sequence belongs to the ThiC family. As to quaternary structure, homodimer. [4Fe-4S] cluster is required as a cofactor.

The catalysed reaction is 5-amino-1-(5-phospho-beta-D-ribosyl)imidazole + S-adenosyl-L-methionine = 4-amino-2-methyl-5-(phosphooxymethyl)pyrimidine + CO + 5'-deoxyadenosine + formate + L-methionine + 3 H(+). The protein operates within cofactor biosynthesis; thiamine diphosphate biosynthesis. Catalyzes the synthesis of the hydroxymethylpyrimidine phosphate (HMP-P) moiety of thiamine from aminoimidazole ribotide (AIR) in a radical S-adenosyl-L-methionine (SAM)-dependent reaction. This chain is Phosphomethylpyrimidine synthase, found in Rhizobium etli (strain ATCC 51251 / DSM 11541 / JCM 21823 / NBRC 15573 / CFN 42).